A 355-amino-acid polypeptide reads, in one-letter code: uncharacterized protein (355 aa).

This sequence belongs to the carbohydrate kinase PfkB family.

This is an uncharacterized protein from Dictyostelium discoideum (Social amoeba).